A 363-amino-acid chain; its full sequence is MSRFQPYLTEAQENDLRRIAQAICAPGKGILAADESTATMGKRLQQIGVENNEENRRLYRQLLFSADHKLAENISGVILFEETLHQKSDDGKTLPTLLAERNIIPGIKVDKGVVPLAGTDNETTTQGLDDLASRCAEYWRLGCRFAKWRCVLKISSHTPSYLAMLENANVLARYASICQQNGLVPIVEPEVLPDGDHDLLTAQRVTEQVLAFVYKALADHHVYLEGTLLKPNMVTAGQACKKAYTPQENALATVRALQRTVPPAVPGITFLSGGQSELDATKNLNEINKIPGPKPWALTFSFGRALQASVLATWKGKKENVHAAQEELLKLAKANGAAAVGKFEGNMGTTLGDKSLFVANHAY.

Residues Arg56 and Lys147 each contribute to the substrate site. The Proton acceptor role is filled by Glu188. The active-site Schiff-base intermediate with dihydroxyacetone-P is the Lys230.

Belongs to the class I fructose-bisphosphate aldolase family.

It carries out the reaction beta-D-fructose 1,6-bisphosphate = D-glyceraldehyde 3-phosphate + dihydroxyacetone phosphate. Its pathway is carbohydrate degradation; glycolysis; D-glyceraldehyde 3-phosphate and glycerone phosphate from D-glucose: step 4/4. This chain is Fructose-bisphosphate aldolase, found in Schistosoma mansoni (Blood fluke).